Consider the following 201-residue polypeptide: MINKAILGGTFDPIHNAHINVAYEALERFNLEEVIFIPAGNPPHKINLKKTPAHIRYEMVKLAIEKETRFSISDFEIKSKSLSYTYRTLKHFKEKEPETNWYFITGEDCLSYLEHWKYIDEIFNICNFVIFSREGFKEKEEIIKKKKSILLKYRKEILFMDASILDISSTKIRNRIKEGKEVSFYMPDKVYKFILQNNLYK.

It belongs to the NadD family.

It carries out the reaction nicotinate beta-D-ribonucleotide + ATP + H(+) = deamido-NAD(+) + diphosphate. Its pathway is cofactor biosynthesis; NAD(+) biosynthesis; deamido-NAD(+) from nicotinate D-ribonucleotide: step 1/1. Catalyzes the reversible adenylation of nicotinate mononucleotide (NaMN) to nicotinic acid adenine dinucleotide (NaAD). This Clostridium botulinum (strain Okra / Type B1) protein is Probable nicotinate-nucleotide adenylyltransferase.